The chain runs to 283 residues: Bifunctional protein FolD (283 aa).

NADP(+) contacts are provided by residues 164-166 (GRS), Ser189, and Thr230.

Belongs to the tetrahydrofolate dehydrogenase/cyclohydrolase family. In terms of assembly, homodimer.

The enzyme catalyses (6R)-5,10-methylene-5,6,7,8-tetrahydrofolate + NADP(+) = (6R)-5,10-methenyltetrahydrofolate + NADPH. It carries out the reaction (6R)-5,10-methenyltetrahydrofolate + H2O = (6R)-10-formyltetrahydrofolate + H(+). It participates in one-carbon metabolism; tetrahydrofolate interconversion. Its function is as follows. Catalyzes the oxidation of 5,10-methylenetetrahydrofolate to 5,10-methenyltetrahydrofolate and then the hydrolysis of 5,10-methenyltetrahydrofolate to 10-formyltetrahydrofolate. The polypeptide is Bifunctional protein FolD (Dictyoglomus thermophilum (strain ATCC 35947 / DSM 3960 / H-6-12)).